The sequence spans 148 residues: SsrA-binding protein (148 aa).

The segment at 128–148 (ESIAKKDQERNLKREFKNNNR) is disordered.

It belongs to the SmpB family.

It is found in the cytoplasm. In terms of biological role, required for rescue of stalled ribosomes mediated by trans-translation. Binds to transfer-messenger RNA (tmRNA), required for stable association of tmRNA with ribosomes. tmRNA and SmpB together mimic tRNA shape, replacing the anticodon stem-loop with SmpB. tmRNA is encoded by the ssrA gene; the 2 termini fold to resemble tRNA(Ala) and it encodes a 'tag peptide', a short internal open reading frame. During trans-translation Ala-aminoacylated tmRNA acts like a tRNA, entering the A-site of stalled ribosomes, displacing the stalled mRNA. The ribosome then switches to translate the ORF on the tmRNA; the nascent peptide is terminated with the 'tag peptide' encoded by the tmRNA and targeted for degradation. The ribosome is freed to recommence translation, which seems to be the essential function of trans-translation. The polypeptide is SsrA-binding protein (Fusobacterium nucleatum subsp. nucleatum (strain ATCC 25586 / DSM 15643 / BCRC 10681 / CIP 101130 / JCM 8532 / KCTC 2640 / LMG 13131 / VPI 4355)).